The chain runs to 576 residues: Rho GTPase-activating protein gacP (576 aa).

A coiled-coil region spans residues 123-189 (LKSIIKTELK…RTNFERVGID (67 aa)). The Rho-GAP domain maps to 277–462 (EDLSVLLNRE…TIIQNFDRIF (186 aa)). Positions 472-576 (VPDTYVPPPN…DEGDAVELSD (105 aa)) are disordered. Residues 482-500 (NTRNNSVNNFNNVQPSSFS) are compositionally biased toward low complexity. A compositionally biased stretch (polar residues) spans 501-513 (ASTSRSINLNKST). Over residues 514–530 (NNPNINDDNNNNNNINN) the composition is skewed to low complexity. The segment covering 565–576 (SFDEGDAVELSD) has biased composition (acidic residues).

Its subcellular location is the cytoplasm. Its function is as follows. Rho GTPase-activating protein involved in the signal transduction pathway. This is Rho GTPase-activating protein gacP (gacP) from Dictyostelium discoideum (Social amoeba).